The chain runs to 483 residues: GTPase Der (483 aa).

EngA-type G domains lie at 3–167 and 212–387; these read FTLA…GEER and LRIA…EIWN. GTP-binding positions include 9-16, 56-60, 119-122, 218-225, 265-269, and 330-333; these read GRPNVGKS, DTAGL, NKAE, GRPNAGKS, DTAGM, and NKWD. In terms of domain architecture, KH-like spans 388–472; it reads RRISTGRLNR…PIRLSLRTSD (85 aa).

It belongs to the TRAFAC class TrmE-Era-EngA-EngB-Septin-like GTPase superfamily. EngA (Der) GTPase family. In terms of assembly, associates with the 50S ribosomal subunit.

Functionally, GTPase that plays an essential role in the late steps of ribosome biogenesis. This is GTPase Der from Brucella ovis (strain ATCC 25840 / 63/290 / NCTC 10512).